Reading from the N-terminus, the 3838-residue chain is Replicase polyprotein 1ab (3838 aa).

Residues 8–28 (CMCTPAARVFWNAGQVFCTRC) form a C4-type; atypical zinc finger. A Peptidase C31 domain is found at 69–180 (ECTPSGCCWL…QPFCPFEEAH (112 aa)). The segment at 69 to 182 (ECTPSGCCWL…FCPFEEAHSD (114 aa)) is PCP1-alpha. Catalysis depends on for Nsp1-alpha papain-like cysteine proteinase activity residues cysteine 76 and histidine 146. The tract at residues 203-204 (MM) is important for host EIF2AK2 inhibition. The interval 269-384 (PNVFDGKCWL…IFRFGAHKWY (116 aa)) is PCP1-beta. A Peptidase C32 domain is found at 269-385 (PNVFDGKCWL…FRFGAHKWYG (117 aa)). Residues cysteine 276 and histidine 345 each act as for Nsp1-beta papain-like cysteine proteinase activity in the active site. The interval 418–505 (ITTYSPPTDG…GVHWEVEVRS (88 aa)) is OTU-like. One can recognise a Peptidase C33 domain in the interval 420–527 (TYSPPTDGSC…VGVCSEGCVA (108 aa)). Active-site for Nsp2 cysteine proteinase activity residues include cysteine 429 and histidine 498. Disordered stretches follow at residues 728–758 (AIGS…SHPA) and 1027–1064 (SVTP…SHAS). Over residues 737–749 (DSKRENMHNSRED) the composition is skewed to basic and acidic residues. 5 consecutive transmembrane segments (helical) span residues 1094 to 1114 (LMTW…TLFS), 1117 to 1137 (GSMA…LLLC), 1162 to 1182 (GVFG…SNPV), 1211 to 1231 (GLVV…LGGS), and 1235 to 1255 (WHVI…VYVV). The segment at 1132–1255 (LALLLCRSYP…DLALSLVYVV (124 aa)) is HD1. A WCCH region spans residues 1310–1334 (TGWRGCWRGESPIHQPHQKPIAYAN). 4 helical membrane passes run 1450–1470 (TLAV…GLWF), 1526–1546 (EVGI…RLAL), 1556–1576 (AFCA…PILL), and 1592–1612 (FLVF…GLLW). Residues 1451–1612 (LAVAQVSVWT…LSLGITGLLW (162 aa)) are HD2. The Peptidase S32 domain maps to 1677-1879 (GAFRTHKPCL…SLLASVPVME (203 aa)). Active-site charge relay system; for 3C-like serine proteinase activity residues include histidine 1715, aspartate 1740, and serine 1793. The next 5 helical transmembrane spans lie at 1875–1895 (VPVM…FLLW), 1916–1936 (ILPA…LAWA), 1960–1980 (LAFY…AFAG), 2003–2023 (SYVP…LWLF), and 2029–2048 (HNML…RYFA). The tract at residues 1902 to 2023 (WTPIVAVGFF…HALGVILWLF (122 aa)) is HD3. Positions 2364–2527 (IISQLQGLTT…LPYKLYPVRG (164 aa)) constitute a NiRAN domain. The RdRp catalytic domain occupies 2765–2899 (AGRCLEADLA…LYAERPTFPN (135 aa)). The 64-residue stretch at 3021–3084 (GKKFRHCGIC…SPVGAGRSPL (64 aa)) folds into the AV ZBD domain. Zn(2+) is bound by residues cysteine 3027, cysteine 3030, cysteine 3040, cysteine 3045, histidine 3048, histidine 3050, histidine 3052, histidine 3054, cysteine 3061, histidine 3063, cysteine 3070, and cysteine 3073. The (+)RNA virus helicase ATP-binding domain maps to 3134–3293 (DLPDGDYQVV…VFDQMPQKQL (160 aa)). Residue 3168–3175 (VGPPGSGK) coordinates ATP. Residues 3294 to 3423 (TTIYRFGPNI…FSRGDDLVVL (130 aa)) form the (+)RNA virus helicase C-terminal domain. An AV-Nsp11N/CoV-Nsp15M domain is found at 3462-3559 (EGSCMPLPQV…LTLYIRGEPQ (98 aa)). A NendoU domain is found at 3561–3683 (LPETLVSTGR…MVWKGATAYF (123 aa)). Residues histidine 3592, histidine 3607, and lysine 3636 contribute to the active site.

This sequence belongs to the arteriviridae polyprotein family. Nsp1-alpha papain-like: Interacts with host RNF31. As to quaternary structure, interacts with host EIF2AK2; this interaction occurs in host stress granules and leads to EIF2AK2 inhibition. Interacts with host G3BP1; this interaction probably plays a role in Nsp1-beta-mediated inhibition of host EIF2AK2. In terms of assembly, interacts with host DDX18; this interaction redistributes host DDX18 to the cytoplasm. Interacts with host IFITM1. As to quaternary structure, interacts with host DDX5. In terms of assembly, interacts with host OTULIN. Interacts with host LGALS3. Specific enzymatic cleavages in vivo by its own proteases yield mature proteins. Nsp1 is autocleaved into two subunits, Nsp1-alpha and Nsp1-beta. There are two alternative pathways for processing. Either nsp4-5 is cleaved, which represents the major pathway or the nsp5-6 and nsp6-7 are processed, which represents the minor pathway. The major pathway occurs when nsp2 acts as a cofactor for nsp4.

The protein resides in the host nucleus. The protein localises to the host cytoplasm. Its subcellular location is the host membrane. It is found in the host endoplasmic reticulum. It localises to the host perinuclear region. The catalysed reaction is RNA(n) + a ribonucleoside 5'-triphosphate = RNA(n+1) + diphosphate. It catalyses the reaction ATP + H2O = ADP + phosphate + H(+). It carries out the reaction Thiol-dependent hydrolysis of ester, thioester, amide, peptide and isopeptide bonds formed by the C-terminal Gly of ubiquitin (a 76-residue protein attached to proteins as an intracellular targeting signal).. The enzyme catalyses uridylyl-uridylyl-ribonucleotide-RNA = a 3'-end uridylyl-2',3'-cyclophospho-uridine-RNA + a 5'-end dephospho-ribonucleoside-RNA. Contains the activities necessary for the transcription of negative stranded RNA, leader RNA, subgenomic mRNAs and progeny virion RNA as well as proteinases responsible for the cleavage of the polyprotein into functional products. In terms of biological role, inhibits host IFN-beta production. Plays a role in the degradation of the host transcriptional activator CREBBP protein. The degradation of host CREBBP which is a key component of the IFN enhanceosome is likely responsible for the inhibition of interferon mediated by Nsp1-alpha. Also participates in the inhibition of host NF-kappa-B activation by counteracting LUBAC-dependent induction of NF-kappa-B. Reduces host NEMO ubiquitination by blocking the interaction between the two LUBAC complex components RNF31 and SHARPIN. Functionally, plays a role in blocking host mRNA nuclear export to the cytoplasm and subversion of host protein synthesis. Additionally, inhibits the interferon-activated JAK/STAT signal transduction by mediating the ubiquitination and subsequent proteasomal degradation of host KPNA1. Repurposes the host antiviral stress granules into a proviral platform to counteract the EIF2AK2/PKR restriction, thereby regulating the host inflammatory response. Its function is as follows. Multifunctional protein that acts as a viral protease and as a viral antagonist of host immune response. Cleaves the nsp2/nsp3 site in the viral polyprotein. Displays deubiquitinating activity that cleaves both ubiquitinated and ISGylated products and therefore inhibits ubiquitin and ISG15-dependent host innate immunity. Also deubiquinates host NFKBIA, thereby interfering with NFKBIA degradation and impairing subsequent NF-kappa-B activation. Plays a role in the inhibition of the immune response by interacting with host IFITM1. This interaction leads to the proteasomal degradation of the IFN-induced antiviral protein IFITM1. In terms of biological role, cleaves the majority of cleavage sites present in the C-terminus of the polyprotein. Triggers host apoptosis through caspase-3, -8, and -9 activations. Subverts host innate immune responses through its protease activity. Targets the NF-kappa-B essential modulator NEMO and mediates its cleavage. Blocks host interferon beta induction and downstream signaling by cleaving mitochondrial MAVS, dislodging it from the mitochondria. Impairs host defense by cleaving host mRNA-decapping enzyme DCP1A to attenuate its antiviral activity. Functionally, plays a role in the initial induction of autophagosomes from host endoplasmic reticulum. Its function is as follows. Plays a role in the inhibition of host STAT3 signaling pathway by inducing the degradation of STAT3. Responsible for replication and transcription of the viral RNA genome. In terms of biological role, displays RNA and DNA duplex-unwinding activities with 5' to 3' polarity. Functionally, plays a role in viral transcription/replication and prevents the simultaneous activation of host cell dsRNA sensors, such as MDA5/IFIH1, OAS, PKR and NLRP3 inflammasome. Acts by degrading the 5'-polyuridines generated during replication of the poly(A) region of viral genomic and subgenomic RNAs. Catalyzes a two-step reaction in which a 2'3'-cyclic phosphate (2'3'-cP) is first generated by 2'-O transesterification, which is then hydrolyzed to a 3'-phosphate (3'-P). If not degraded, poly(U) RNA would hybridize with poly(A) RNA tails and activate host dsRNA sensors. Also plays a role in the inhibition of host type I interferon production by recruiting host OTULIN to promote removal of linear ubiquitination targeting host NEMO. This Sus scrofa (Pig) protein is Replicase polyprotein 1ab.